Consider the following 55-residue polypeptide: Large ribosomal subunit protein bL33C (55 aa).

Belongs to the bacterial ribosomal protein bL33 family.

The chain is Large ribosomal subunit protein bL33C from Kineococcus radiotolerans (strain ATCC BAA-149 / DSM 14245 / SRS30216).